The sequence spans 436 residues: Histidinol dehydrogenase (436 aa).

Residues S237, Q259, and H262 each contribute to the substrate site. Zn(2+) is bound by residues Q259 and H262. Residues E327 and H328 each act as proton acceptor in the active site. Substrate contacts are provided by H328, D361, E415, and H420. Residue D361 coordinates Zn(2+). Position 420 (H420) interacts with Zn(2+).

It belongs to the histidinol dehydrogenase family. The cofactor is Zn(2+).

It catalyses the reaction L-histidinol + 2 NAD(+) + H2O = L-histidine + 2 NADH + 3 H(+). It functions in the pathway amino-acid biosynthesis; L-histidine biosynthesis; L-histidine from 5-phospho-alpha-D-ribose 1-diphosphate: step 9/9. Its function is as follows. Catalyzes the sequential NAD-dependent oxidations of L-histidinol to L-histidinaldehyde and then to L-histidine. The polypeptide is Histidinol dehydrogenase (Helicobacter hepaticus (strain ATCC 51449 / 3B1)).